The primary structure comprises 313 residues: tRNA dimethylallyltransferase (313 aa).

11–18 contributes to the ATP binding site; that stretch reads GPTAGGKT. 13–18 contacts substrate; that stretch reads TAGGKT. 3 interaction with substrate tRNA regions span residues 36-39, 160-164, and 243-248; these read DSAL, QRIGR, and RCVGYR.

The protein belongs to the IPP transferase family. In terms of assembly, monomer. It depends on Mg(2+) as a cofactor.

It catalyses the reaction adenosine(37) in tRNA + dimethylallyl diphosphate = N(6)-dimethylallyladenosine(37) in tRNA + diphosphate. Functionally, catalyzes the transfer of a dimethylallyl group onto the adenine at position 37 in tRNAs that read codons beginning with uridine, leading to the formation of N6-(dimethylallyl)adenosine (i(6)A). The protein is tRNA dimethylallyltransferase of Neisseria meningitidis serogroup A / serotype 4A (strain DSM 15465 / Z2491).